The primary structure comprises 299 residues: Zeta-sarcoglycan (299 aa).

At 1–37 the chain is on the cytoplasmic side; sequence MTREQYILATQQNNLPRTENAQLYPVGIYGWRKRCLY. A helical; Signal-anchor for type II membrane protein membrane pass occupies residues 38–58; that stretch reads FFVLLLLVTMIVNLAMTIWIL. The Extracellular portion of the chain corresponds to 59–299; the sequence is KVMNFTVDGM…QSSSNICLWS (241 aa). Asn62 and Asn110 each carry an N-linked (GlcNAc...) asparagine glycan. An intrachain disulfide couples Cys273 to Cys289.

This sequence belongs to the sarcoglycan beta/delta/gamma/zeta family.

The protein localises to the cell membrane. It is found in the sarcolemma. Its subcellular location is the cytoplasm. The protein resides in the cytoskeleton. Component of the sarcoglycan complex, a subcomplex of the dystrophin-glycoprotein complex which forms a link between the F-actin cytoskeleton and the extracellular matrix. May play a role in the maintenance of striated muscle membrane stability. This chain is Zeta-sarcoglycan (SGCZ), found in Homo sapiens (Human).